The following is a 288-amino-acid chain: Ribosomal RNA small subunit methyltransferase A (288 aa).

6 residues coordinate S-adenosyl-L-methionine: N18, L20, G45, E66, D91, and N118.

It belongs to the class I-like SAM-binding methyltransferase superfamily. rRNA adenine N(6)-methyltransferase family. RsmA subfamily.

The protein localises to the cytoplasm. It carries out the reaction adenosine(1518)/adenosine(1519) in 16S rRNA + 4 S-adenosyl-L-methionine = N(6)-dimethyladenosine(1518)/N(6)-dimethyladenosine(1519) in 16S rRNA + 4 S-adenosyl-L-homocysteine + 4 H(+). Specifically dimethylates two adjacent adenosines (A1518 and A1519) in the loop of a conserved hairpin near the 3'-end of 16S rRNA in the 30S particle. May play a critical role in biogenesis of 30S subunits. The polypeptide is Ribosomal RNA small subunit methyltransferase A (Pasteurella multocida (strain Pm70)).